Consider the following 524-residue polypeptide: Butyrophilin subfamily 1 member A1 (524 aa).

The first 26 residues, 1-26, serve as a signal peptide directing secretion; that stretch reads MAVPTNSCLLVCLLTLTVLQLPTLDS. Topologically, residues 27 to 247 are extracellular; it reads AAPFDVTAPQ…APFVPRLTPW (221 aa). Ig-like V-type domains follow at residues 29 to 141 and 149 to 235; these read PFDV…VYLK and PQIS…VEIS. 2 disulfide bridges follow: Cys51–Cys125 and Cys165–Cys219. Asn56 and Asn216 each carry an N-linked (GlcNAc...) asparagine glycan. The helical transmembrane segment at 248-268 threads the bilayer; sequence IVAVAIILLALGFLTIGSIFF. Residues 269–524 are Cytoplasmic-facing; the sequence is TWKLYKERSS…IPFSPSQAAP (256 aa). Residues 286 to 480 enclose the B30.2/SPRY domain; sequence SKERLLEELR…LTICSTANGP (195 aa).

Belongs to the immunoglobulin superfamily. BTN/MOG family. Seems to associate with xanthine dehydrogenase/oxidase. In terms of processing, N-glycosylated. Strongly expressed in lactating mammary tissue (at protein level). About 100-fold lower levels in virgin mammary tissue. Also detected in spleen and thymus at 10-20 times lower levels compared to those detected in virgin mammary gland. Very low levels in several other tissues, including brain, heart, kidney, lymph node, lung and small intestine. In the thymus, detected in the stroma, in epithelial cells (at protein level). Most prominent in medullary areas of the thymus and at the corticomedullary junction (at protein level).

Its subcellular location is the membrane. Functionally, may function in the secretion of milk-fat droplets. May act as a specific membrane-associated receptor for the association of cytoplasmic droplets with the apical plasma membrane. Inhibits the proliferation of CD4 and CD8 T-cells activated by anti-CD3 antibodies, T-cell metabolism and IL2 and IFNG secretion. The protein is Butyrophilin subfamily 1 member A1 (Btn1a1) of Mus musculus (Mouse).